A 142-amino-acid chain; its full sequence is Small ribosomal subunit protein uS11c (142 aa).

It belongs to the universal ribosomal protein uS11 family. As to quaternary structure, part of the 30S ribosomal subunit.

Its subcellular location is the plastid. The protein localises to the chloroplast. In Welwitschia mirabilis (Tree tumbo), this protein is Small ribosomal subunit protein uS11c.